The chain runs to 315 residues: Putative HTH-type transcriptional regulatory protein PF1851 (315 aa).

One can recognise an HTH cro/C1-type domain in the interval 131-189 (LRELREKYGYSTTELAEMLGVSRKSVQRYEKGEGMVSIDVAIRLEEIFDEPLVKPIDIF). Positions 142–161 (TTELAEMLGVSRKSVQRYEK) form a DNA-binding region, H-T-H motif.

This Pyrococcus furiosus (strain ATCC 43587 / DSM 3638 / JCM 8422 / Vc1) protein is Putative HTH-type transcriptional regulatory protein PF1851.